The following is a 714-amino-acid chain: Mitochondrial potassium channel ATP-binding subunit (714 aa).

The N-terminal 25 residues, 1 to 25, are a transit peptide targeting the mitochondrion; it reads MLVHLFRVGIRGGPVPRWSLQSLRF. A run of 4 helical transmembrane segments spans residues 127-147, 178-198, 278-298, and 365-385; these read LLAL…NVQI, IQLL…LVLL, LMLA…GSGL, and NIAF…LVAG. Positions 132–419 constitute an ABC transmembrane type-1 domain; the sequence is LAIVLALGAA…LSVLFGQVVR (288 aa). An ABC transporter domain is found at 454–691; the sequence is ITFQNVSFSY…GGLYAELIRR (238 aa). ATP is bound at residue 489–496; the sequence is GQSGGGKT.

It belongs to the ABC transporter superfamily. ABCB family. Multidrug resistance exporter (TC 3.A.1.201) subfamily. As to quaternary structure, the mitochondrial potassium channel (mitoK(ATP)) is composed of 4 subunits of CCDC51/MITOK and 4 subunits of ABCB8/MITOSUR. Physically interacts with PAAT. Interacts with Neuropilin-1 (NRP1) in mitochondria. As to expression, strong expression is found in the heart, brain and testis. In the testis, expressed both in the somatic Sertoli cells and peritubular cells and in the germline (spermatogonia and pachytene spermatocytes). Also expressed in the lung, liver, intestine and kidney.

It localises to the mitochondrion inner membrane. Channel activity inhibited by ATP via ABCB8/MITOSUR subunit. Its function is as follows. ATP-binding subunit of the mitochondrial ATP-gated potassium channel (mitoK(ATP)). v. An increase in ATP intracellular levels closes the channel, inhibiting K(+) transport, whereas a decrease in ATP levels enhances K(+) uptake in the mitochondrial matrix. Plays a role in mitochondrial iron transport. Required for maintenance of normal cardiac function, possibly by influencing mitochondrial iron export and regulating the maturation of cytosolic iron sulfur cluster-containing enzymes. This is Mitochondrial potassium channel ATP-binding subunit from Rattus norvegicus (Rat).